We begin with the raw amino-acid sequence, 85 residues long: Phosphocarrier protein HPr (85 aa).

In terms of domain architecture, HPr spans 1–85; that stretch reads MFQKEIKINA…HLSKIMTELE (85 aa). Catalysis depends on His15, which acts as the Pros-phosphohistidine intermediate.

The protein belongs to the HPr family.

It localises to the cytoplasm. Functionally, general (non sugar-specific) component of the phosphoenolpyruvate-dependent sugar phosphotransferase system (sugar PTS). This major carbohydrate active-transport system catalyzes the phosphorylation of incoming sugar substrates concomitantly with their translocation across the cell membrane. The phosphoryl group from phosphoenolpyruvate (PEP) is transferred to the phosphoryl carrier protein HPr by enzyme I. Phospho-HPr then transfers it to the PTS EIIA domain. The polypeptide is Phosphocarrier protein HPr (ptsH) (Buchnera aphidicola subsp. Schizaphis graminum (strain Sg)).